Consider the following 286-residue polypeptide: Glycine--tRNA ligase alpha subunit (286 aa).

Belongs to the class-II aminoacyl-tRNA synthetase family. As to quaternary structure, tetramer of two alpha and two beta subunits.

It localises to the cytoplasm. The enzyme catalyses tRNA(Gly) + glycine + ATP = glycyl-tRNA(Gly) + AMP + diphosphate. In Campylobacter concisus (strain 13826), this protein is Glycine--tRNA ligase alpha subunit.